The following is a 509-amino-acid chain: GMP synthase [glutamine-hydrolyzing] (509 aa).

The 190-residue stretch at 4–193 (KILILDFGSQ…VVHICGCSQD (190 aa)) folds into the Glutamine amidotransferase type-1 domain. Cys79 serves as the catalytic Nucleophile. Residues His167 and Glu169 contribute to the active site. Residues 194–384 (WTPDAFVETT…LGIDDIILKR (191 aa)) enclose the GMPS ATP-PPase domain. Residue 221 to 227 (SGGVDSS) participates in ATP binding.

As to quaternary structure, homodimer.

It carries out the reaction XMP + L-glutamine + ATP + H2O = GMP + L-glutamate + AMP + diphosphate + 2 H(+). It participates in purine metabolism; GMP biosynthesis; GMP from XMP (L-Gln route): step 1/1. In terms of biological role, catalyzes the synthesis of GMP from XMP. The protein is GMP synthase [glutamine-hydrolyzing] of Cytophaga hutchinsonii (strain ATCC 33406 / DSM 1761 / CIP 103989 / NBRC 15051 / NCIMB 9469 / D465).